The chain runs to 340 residues: 4-hydroxy-3-methylbut-2-enyl diphosphate reductase (340 aa).

Cys-13 lines the [4Fe-4S] cluster pocket. Residues His-42 and His-75 each coordinate (2E)-4-hydroxy-3-methylbut-2-enyl diphosphate. 2 residues coordinate dimethylallyl diphosphate: His-42 and His-75. Isopentenyl diphosphate contacts are provided by His-42 and His-75. A [4Fe-4S] cluster-binding site is contributed by Cys-97. Position 125 (His-125) interacts with (2E)-4-hydroxy-3-methylbut-2-enyl diphosphate. His-125 is a dimethylallyl diphosphate binding site. Residue His-125 coordinates isopentenyl diphosphate. The active-site Proton donor is Glu-127. Thr-165 contributes to the (2E)-4-hydroxy-3-methylbut-2-enyl diphosphate binding site. Position 195 (Cys-195) interacts with [4Fe-4S] cluster. Residues Ser-223, Ser-224, Asn-225, and Ser-267 each contribute to the (2E)-4-hydroxy-3-methylbut-2-enyl diphosphate site. Positions 223, 224, 225, and 267 each coordinate dimethylallyl diphosphate. Isopentenyl diphosphate contacts are provided by Ser-223, Ser-224, Asn-225, and Ser-267. The tract at residues 317–340 is disordered; sequence NNLDNKTAASEEADSLSNDTEQEA. The span at 331 to 340 shows a compositional bias: polar residues; the sequence is SLSNDTEQEA.

The protein belongs to the IspH family. [4Fe-4S] cluster is required as a cofactor.

It catalyses the reaction isopentenyl diphosphate + 2 oxidized [2Fe-2S]-[ferredoxin] + H2O = (2E)-4-hydroxy-3-methylbut-2-enyl diphosphate + 2 reduced [2Fe-2S]-[ferredoxin] + 2 H(+). The enzyme catalyses dimethylallyl diphosphate + 2 oxidized [2Fe-2S]-[ferredoxin] + H2O = (2E)-4-hydroxy-3-methylbut-2-enyl diphosphate + 2 reduced [2Fe-2S]-[ferredoxin] + 2 H(+). It functions in the pathway isoprenoid biosynthesis; dimethylallyl diphosphate biosynthesis; dimethylallyl diphosphate from (2E)-4-hydroxy-3-methylbutenyl diphosphate: step 1/1. It participates in isoprenoid biosynthesis; isopentenyl diphosphate biosynthesis via DXP pathway; isopentenyl diphosphate from 1-deoxy-D-xylulose 5-phosphate: step 6/6. Catalyzes the conversion of 1-hydroxy-2-methyl-2-(E)-butenyl 4-diphosphate (HMBPP) into a mixture of isopentenyl diphosphate (IPP) and dimethylallyl diphosphate (DMAPP). Acts in the terminal step of the DOXP/MEP pathway for isoprenoid precursor biosynthesis. The polypeptide is 4-hydroxy-3-methylbut-2-enyl diphosphate reductase (Zymomonas mobilis subsp. mobilis (strain ATCC 31821 / ZM4 / CP4)).